The primary structure comprises 238 residues: Ribonuclease PH (238 aa).

Residues R86 and 124 to 126 each bind phosphate; that span reads GTR.

Belongs to the RNase PH family. As to quaternary structure, homohexameric ring arranged as a trimer of dimers.

The catalysed reaction is tRNA(n+1) + phosphate = tRNA(n) + a ribonucleoside 5'-diphosphate. Its function is as follows. Phosphorolytic 3'-5' exoribonuclease that plays an important role in tRNA 3'-end maturation. Removes nucleotide residues following the 3'-CCA terminus of tRNAs; can also add nucleotides to the ends of RNA molecules by using nucleoside diphosphates as substrates, but this may not be physiologically important. Probably plays a role in initiation of 16S rRNA degradation (leading to ribosome degradation) during starvation. This Enterobacter sp. (strain 638) protein is Ribonuclease PH.